A 370-amino-acid polypeptide reads, in one-letter code: Mitochondrial carrier protein SCaMC-3L (370 aa).

Solcar repeat units lie at residues 90 to 176 (EALW…CKNY), 184 to 269 (PPFQ…LQCF), and 280 to 367 (PSGL…MKKT). 6 helical membrane passes run 96-113 (LLSG…TAPL), 151-170 (GNGI…FSVF), 194-207 (SLAV…INPM), 245-263 (YLPN…LAVY), 282-306 (GLVS…LTLV), and 342-361 (GMTP…YVVY).

Belongs to the mitochondrial carrier (TC 2.A.29) family.

Its subcellular location is the mitochondrion inner membrane. It carries out the reaction Mg(2+)(out) + phosphate(in) + ATP(out) = Mg(2+)(in) + phosphate(out) + ATP(in). It catalyses the reaction ADP(out) + phosphate(in) + H(+)(out) = ADP(in) + phosphate(out) + H(+)(in). In terms of biological role, calcium-independent ATP-Mg/Pi exchanger that catalyzes the electroneutral exchange of Mg-ATP or free ADP against an hydrogenphosphate and participates in the net transport of adenine nucleotides across the mitochondria inner membrane. In Homo sapiens (Human), this protein is Mitochondrial carrier protein SCaMC-3L.